The chain runs to 367 residues: Glutamate 5-kinase (367 aa).

K10 contributes to the ATP binding site. Positions 50, 137, and 149 each coordinate substrate. ATP is bound by residues T169 to D170 and T211 to K217. Residues A275 to E353 enclose the PUA domain.

This sequence belongs to the glutamate 5-kinase family.

It is found in the cytoplasm. The catalysed reaction is L-glutamate + ATP = L-glutamyl 5-phosphate + ADP. Its pathway is amino-acid biosynthesis; L-proline biosynthesis; L-glutamate 5-semialdehyde from L-glutamate: step 1/2. Catalyzes the transfer of a phosphate group to glutamate to form L-glutamate 5-phosphate. This Proteus mirabilis (strain HI4320) protein is Glutamate 5-kinase.